Consider the following 381-residue polypeptide: Glycerate 2-kinase (381 aa).

This sequence belongs to the glycerate kinase type-1 family.

The enzyme catalyses (R)-glycerate + ATP = (2R)-2-phosphoglycerate + ADP + H(+). In terms of biological role, catalyzes the transfer of the phosphate group from adenosine triphosphate (ATP) to (R)-glycerate to form (2R)-2-phosphoglycerate, an enzymatic step in (L)-glucarate/galactarate catabolic pathway. The protein is Glycerate 2-kinase (garK) of Escherichia coli (strain K12).